A 161-amino-acid chain; its full sequence is C-type lectin lectoxin-Lio3 (161 aa).

An N-terminal signal peptide occupies residues Met1–Ala23. 3 disulfides stabilise this stretch: Cys27/Cys38, Cys55/Cys154, and Cys129/Cys146. The region spanning His34 to Gln155 is the C-type lectin domain. Asn35 carries N-linked (GlcNAc...) asparagine glycosylation. A Mannose-binding motif is present at residues Lys117 to Glu119. Ca(2+)-binding residues include Glu127, Asn142, and Asp143.

It belongs to the true venom lectin family. Expressed by the venom gland.

It is found in the secreted. Functionally, mannose-binding lectin which recognizes specific carbohydrate structures and agglutinates a variety of animal cells by binding to cell-surface glycoproteins and glycolipids. May be a calcium-dependent lectin. This is C-type lectin lectoxin-Lio3 from Erythrolamprus poecilogyrus (Water snake).